Consider the following 368-residue polypeptide: Cyclin-dependent kinase 2 (368 aa).

One can recognise a Protein kinase domain in the interval Phe-45 to Phe-330. ATP-binding positions include Ile-51–Val-59 and Lys-74. Asp-170 serves as the catalytic Proton acceptor. Mg(2+) contacts are provided by Asn-175 and Asp-188.

This sequence belongs to the protein kinase superfamily. CMGC Ser/Thr protein kinase family. CDC2/CDKX subfamily. Interacts with cye-1; the interaction likely regulates cdk-2 activity and is probably required for gld-1 phosphorylation. Mg(2+) is required as a cofactor.

The catalysed reaction is L-seryl-[protein] + ATP = O-phospho-L-seryl-[protein] + ADP + H(+). It carries out the reaction L-threonyl-[protein] + ATP = O-phospho-L-threonyl-[protein] + ADP + H(+). In terms of biological role, serine/threonine-protein kinase which, in association with cye-1, regulates proliferation, quiescent state and cell fate during the development of several cell lineages. In the embryo, initiates the establishment of cell polarity through the recruitment of the centrosomal proteins spd-2 and spd-5 during prophase. Phosphorylation and inhibition of the translational repressor gld-1 by the cdk-2/cye-1 complex regulates the pool of germline stem cells and the size of the mitotic zone in the gonads by preventing entry into meiosis. The sequence is that of Cyclin-dependent kinase 2 from Caenorhabditis elegans.